Consider the following 312-residue polypeptide: MKVAVLGAAGGIGQALALLLKTQLPAGSDLSLYDIAPVTPGVAVDLSHIPTDVTIAGFAGMDPTDALVGADVVLISAGVARKPGMDRSDLFNINAGIIKNLAGKCAEVCPNACIGIITNPVNTTVPIAAEVLKQAGVYDKRKLFGITTLDVIRSETFVSALKGISLADVEVPVIGGHSGVTILPLLSQVKGVEFTAEEVVALTARIQNAGTEVVEAKAGGGSATLSMGQAAARFGLSLVRALQGEKGIVECTYVDGGSEHATFFAQPVLLGKNGVEEVLAYGELSEFETNARDAMLEELKANITLGEEFVAG.

Residues Gly7–Gly13 and Asp34 contribute to the NAD(+) site. Positions 81 and 87 each coordinate substrate. NAD(+)-binding positions include Asn94 and Ile117 to Asn119. Substrate is bound by residues Asn119 and Arg153. His177 functions as the Proton acceptor in the catalytic mechanism. Met227 contributes to the NAD(+) binding site.

This sequence belongs to the LDH/MDH superfamily. MDH type 1 family. As to quaternary structure, homodimer.

It carries out the reaction (S)-malate + NAD(+) = oxaloacetate + NADH + H(+). Catalyzes the reversible oxidation of malate to oxaloacetate. In Moritella sp. (strain 5710), this protein is Malate dehydrogenase (mdh).